The primary structure comprises 447 residues: ATP-dependent protease ATPase subunit HslU (447 aa).

ATP contacts are provided by residues I17 and 59 to 64; that span reads GVGKTE. The segment at 136-160 is disordered; that stretch reads PPARGGFQGEPTAEEKPTEKKESAT. The segment covering 148–159 has biased composition (basic and acidic residues); that stretch reads AEEKPTEKKESA. ATP-binding residues include D260, E325, and R397.

This sequence belongs to the ClpX chaperone family. HslU subfamily. In terms of assembly, a double ring-shaped homohexamer of HslV is capped on each side by a ring-shaped HslU homohexamer. The assembly of the HslU/HslV complex is dependent on binding of ATP.

It is found in the cytoplasm. Functionally, ATPase subunit of a proteasome-like degradation complex; this subunit has chaperone activity. The binding of ATP and its subsequent hydrolysis by HslU are essential for unfolding of protein substrates subsequently hydrolyzed by HslV. HslU recognizes the N-terminal part of its protein substrates and unfolds these before they are guided to HslV for hydrolysis. The protein is ATP-dependent protease ATPase subunit HslU of Coxiella burnetii (strain RSA 331 / Henzerling II).